We begin with the raw amino-acid sequence, 144 residues long: Large ribosomal subunit protein uL16 (144 aa).

Over residues M1–K16 the composition is skewed to basic residues. The disordered stretch occupies residues M1–E20.

Belongs to the universal ribosomal protein uL16 family. As to quaternary structure, part of the 50S ribosomal subunit.

Binds 23S rRNA and is also seen to make contacts with the A and possibly P site tRNAs. This Limosilactobacillus fermentum (strain NBRC 3956 / LMG 18251) (Lactobacillus fermentum) protein is Large ribosomal subunit protein uL16.